Here is a 391-residue protein sequence, read N- to C-terminus: NAD(P)H-quinone oxidoreductase subunit H, chloroplastic (391 aa).

It belongs to the complex I 49 kDa subunit family. As to quaternary structure, NDH is composed of at least 16 different subunits, 5 of which are encoded in the nucleus.

The protein localises to the plastid. It is found in the chloroplast thylakoid membrane. The catalysed reaction is a plastoquinone + NADH + (n+1) H(+)(in) = a plastoquinol + NAD(+) + n H(+)(out). It catalyses the reaction a plastoquinone + NADPH + (n+1) H(+)(in) = a plastoquinol + NADP(+) + n H(+)(out). Functionally, NDH shuttles electrons from NAD(P)H:plastoquinone, via FMN and iron-sulfur (Fe-S) centers, to quinones in the photosynthetic chain and possibly in a chloroplast respiratory chain. The immediate electron acceptor for the enzyme in this species is believed to be plastoquinone. Couples the redox reaction to proton translocation, and thus conserves the redox energy in a proton gradient. The sequence is that of NAD(P)H-quinone oxidoreductase subunit H, chloroplastic from Mesostigma viride (Green alga).